The chain runs to 125 residues: Small ribosomal subunit protein uS12 (125 aa).

Aspartate 89 is subject to 3-methylthioaspartic acid. Residues 106–125 (GVKDRKQSRSKYGAKRPKKA) form a disordered region. The segment covering 113–125 (SRSKYGAKRPKKA) has biased composition (basic residues).

This sequence belongs to the universal ribosomal protein uS12 family. As to quaternary structure, part of the 30S ribosomal subunit. Contacts proteins S8 and S17. May interact with IF1 in the 30S initiation complex.

Functionally, with S4 and S5 plays an important role in translational accuracy. Its function is as follows. Interacts with and stabilizes bases of the 16S rRNA that are involved in tRNA selection in the A site and with the mRNA backbone. Located at the interface of the 30S and 50S subunits, it traverses the body of the 30S subunit contacting proteins on the other side and probably holding the rRNA structure together. The combined cluster of proteins S8, S12 and S17 appears to hold together the shoulder and platform of the 30S subunit. The protein is Small ribosomal subunit protein uS12 of Azoarcus sp. (strain BH72).